Reading from the N-terminus, the 93-residue chain is Antitoxin EndoAI (93 aa).

Belongs to the MazE/EndoAI family. In terms of assembly, homodimer, forms a heterohexamer composed of alternating toxin and antitoxin homodimers which inhibits the toxin's endoribonuclease activity. Antitoxin prevents RNA binding to the endoribonuclease.

Its function is as follows. Antitoxin component of a type II toxin-antitoxin (TA) system. Antitoxin that directly inhibits activity of EndoA in vitro. Upon expression in E.coli counteracts inhibitory effect of endoribonuclease EndoA. The EndoA-EndoAI complex does not seem to bind its own promoter. This is Antitoxin EndoAI from Bacillus subtilis (strain 168).